The primary structure comprises 336 residues: Phospho-N-acetylmuramoyl-pentapeptide-transferase (336 aa).

Helical transmembrane passes span 3-23 (LTLI…PYFI), 53-73 (GGTV…LFSI), 78-98 (SLAL…IGFL), 118-138 (LALQ…PSGI), 143-163 (VFGY…FWVV), 174-194 (GIDG…GVIA), 200-220 (FDVL…FCFN), 226-246 (VFMG…ISIA), 251-271 (WTLL…MLQV), and 316-336 (AFLW…LYVF).

Belongs to the glycosyltransferase 4 family. MraY subfamily. The cofactor is Mg(2+).

It localises to the cell membrane. It carries out the reaction UDP-N-acetyl-alpha-D-muramoyl-L-alanyl-gamma-D-glutamyl-L-lysyl-D-alanyl-D-alanine + di-trans,octa-cis-undecaprenyl phosphate = Mur2Ac(oyl-L-Ala-gamma-D-Glu-L-Lys-D-Ala-D-Ala)-di-trans,octa-cis-undecaprenyl diphosphate + UMP. The protein operates within cell wall biogenesis; peptidoglycan biosynthesis. Functionally, catalyzes the initial step of the lipid cycle reactions in the biosynthesis of the cell wall peptidoglycan: transfers peptidoglycan precursor phospho-MurNAc-pentapeptide from UDP-MurNAc-pentapeptide onto the lipid carrier undecaprenyl phosphate, yielding undecaprenyl-pyrophosphoryl-MurNAc-pentapeptide, known as lipid I. The protein is Phospho-N-acetylmuramoyl-pentapeptide-transferase of Streptococcus pyogenes serotype M5 (strain Manfredo).